Consider the following 345-residue polypeptide: Beta-hexosaminidase (345 aa).

Substrate-binding positions include D60, R68, R132, and 162-163 (KH). H175 acts as the Proton donor/acceptor in catalysis. The active-site Nucleophile is D247.

It belongs to the glycosyl hydrolase 3 family. NagZ subfamily.

The protein localises to the cytoplasm. It catalyses the reaction Hydrolysis of terminal non-reducing N-acetyl-D-hexosamine residues in N-acetyl-beta-D-hexosaminides.. It participates in cell wall biogenesis; peptidoglycan recycling. Plays a role in peptidoglycan recycling by cleaving the terminal beta-1,4-linked N-acetylglucosamine (GlcNAc) from peptide-linked peptidoglycan fragments, giving rise to free GlcNAc, anhydro-N-acetylmuramic acid and anhydro-N-acetylmuramic acid-linked peptides. The sequence is that of Beta-hexosaminidase from Actinobacillus pleuropneumoniae serotype 3 (strain JL03).